Reading from the N-terminus, the 180-residue chain is Trichosurin (180 aa).

Residues 1-15 form the signal peptide; sequence MKLLLLSMGLALVCG. N-linked (GlcNAc...) asparagine glycans are attached at residues Asn67 and Asn148. Cys87 and Cys180 are joined by a disulfide.

This sequence belongs to the calycin superfamily. Lipocalin family. In terms of assembly, homodimer. As to expression, milk.

It localises to the secreted. This is Trichosurin from Trichosurus vulpecula (Brush-tailed possum).